A 687-amino-acid polypeptide reads, in one-letter code: Transketolase 2 (687 aa).

Residue histidine 47 participates in substrate binding. Residues histidine 87 and 135-137 (GPL) contribute to the thiamine diphosphate site. Position 176 (aspartate 176) interacts with Mg(2+). Positions 177 and 206 each coordinate thiamine diphosphate. Positions 206 and 208 each coordinate Mg(2+). 3 residues coordinate substrate: histidine 282, arginine 379, and serine 406. Residue histidine 282 participates in thiamine diphosphate binding. Catalysis depends on glutamate 432, which acts as the Proton donor. Phenylalanine 458 contacts thiamine diphosphate. The substrate site is built by histidine 482, aspartate 490, histidine 494, and arginine 541.

This sequence belongs to the transketolase family. It depends on Mg(2+) as a cofactor. Thiamine diphosphate is required as a cofactor.

The catalysed reaction is D-sedoheptulose 7-phosphate + D-glyceraldehyde 3-phosphate = aldehydo-D-ribose 5-phosphate + D-xylulose 5-phosphate. Its activity is regulated as follows. Activity is increased sixfold following autotrophic growth on methanol compared with that of heterotrophically grown cells. Its function is as follows. Catalyzes the transfer of a two-carbon ketol group from a ketose donor to an aldose acceptor, via a covalent intermediate with the cofactor thiamine pyrophosphate. The polypeptide is Transketolase 2 (Xanthobacter flavus).